The chain runs to 432 residues: Monoacylglycerol lipase ABHD2 (432 aa).

Residues Met-1–Glu-14 are Cytoplasmic-facing. A helical; Signal-anchor for type II membrane protein membrane pass occupies residues Met-15–Val-35. At Arg-36–Ser-432 the chain is on the extracellular side. The 252-residue stretch at Thr-132–Gly-383 folds into the AB hydrolase-1 domain. N-linked (GlcNAc...) asparagine glycosylation occurs at Asn-141. Catalysis depends on Ser-212, which acts as the Nucleophile. The N-linked (GlcNAc...) asparagine glycan is linked to Asn-225. Residues Asp-346 and His-377 each act as charge relay system in the active site. The disordered stretch occupies residues Pro-413–Ser-432. The segment covering Lys-418 to Ser-432 has biased composition (polar residues). N-linked (GlcNAc...) asparagine glycosylation is present at Asn-423.

It belongs to the AB hydrolase superfamily. AB hydrolase 4 family.

It localises to the cell membrane. It catalyses the reaction Hydrolyzes glycerol monoesters of long-chain fatty acids.. It carries out the reaction an acetyl ester + H2O = an aliphatic alcohol + acetate + H(+). The enzyme catalyses a triacylglycerol + H2O = a diacylglycerol + a fatty acid + H(+). The catalysed reaction is 2-(5Z,8Z,11Z,14Z-eicosatetraenoyl)-glycerol + H2O = glycerol + (5Z,8Z,11Z,14Z)-eicosatetraenoate + H(+). It catalyses the reaction a butanoate ester + H2O = an aliphatic alcohol + butanoate + H(+). It carries out the reaction hexadecanoate ester + H2O = an aliphatic alcohol + hexadecanoate + H(+). Acylglycerol lipase activity is activated upon binding to progesterone. Progesterone-dependent acylglycerol lipase that catalyzes hydrolysis of endocannabinoid arachidonoylglycerol (AG) from cell membrane. Acts as a progesterone receptor: progesterone-binding activates the acylglycerol lipase activity, mediating degradation of 1-arachidonoylglycerol (1AG) and 2-arachidonoylglycerol (2AG) to glycerol and arachidonic acid (AA). Also displays an ester hydrolase activity against acetyl ester, butanoate ester and hexadecanoate ester. Plays a key role in sperm capacitation in response to progesterone by mediating degradation of 2AG, an inhibitor of the sperm calcium channel CatSper, leading to calcium influx via CatSper and sperm activation. May also play a role in smooth muscle cells migration. This chain is Monoacylglycerol lipase ABHD2 (abhd2a), found in Danio rerio (Zebrafish).